The chain runs to 359 residues: MQAATVVINRRALRHNLQRLRELAPASKMVAVVKANAYGHGLLETARTLPDADAFGVARLEEALRLRAGGITKPVLLLEGFFDARDLPTISAQHFHTAVHNEEQLAALEEASLDEPVTVWMKLDTGMHRLGVRPEQAEAFYHRLTQCKNVRQPVNIVSHFARADEPKCGATEKQLAIFNTFCEGKPGQRSIAASGGILLWPQSHFDWVRPGIILYGVSPLEDRSTGADFGCQPVMSLTSSLIAVREHKAGEPVGYGGTWVSERDTRLGVVAMGYGDGYPRAAPSGTPVLVNGREVPIVGRVAMDMICVDLGPQAQDKAGDPVILWGEGLPVERIAEMTKVSAYELITRLTSRVAMKYVD.

Lysine 34 (proton acceptor; specific for D-alanine) is an active-site residue. An N6-(pyridoxal phosphate)lysine modification is found at lysine 34. Position 122 is an N6-carboxylysine (lysine 122). Arginine 129 is a substrate binding site. Tyrosine 255 (proton acceptor; specific for L-alanine) is an active-site residue. Methionine 303 lines the substrate pocket.

This sequence belongs to the alanine racemase family. As to quaternary structure, homodimer. Pyridoxal 5'-phosphate serves as cofactor.

It catalyses the reaction L-alanine = D-alanine. Its pathway is amino-acid biosynthesis; D-alanine biosynthesis; D-alanine from L-alanine: step 1/1. It participates in cell wall biogenesis; peptidoglycan biosynthesis. In terms of biological role, catalyzes the interconversion of L-alanine and D-alanine. Provides the D-alanine required for cell wall biosynthesis. This chain is Alanine racemase, biosynthetic, found in Escherichia coli (strain K12).